We begin with the raw amino-acid sequence, 607 residues long: UvrABC system protein C (607 aa).

A GIY-YIG domain is found at 16-94; that stretch reads GRPGVYRMFD…IKEWRPPYNI (79 aa). Residues 203-238 enclose the UVR domain; the sequence is NALSEELSASMEKASMALEFERAAELRDQISMLRRV.

This sequence belongs to the UvrC family. As to quaternary structure, interacts with UvrB in an incision complex.

It localises to the cytoplasm. Its function is as follows. The UvrABC repair system catalyzes the recognition and processing of DNA lesions. UvrC both incises the 5' and 3' sides of the lesion. The N-terminal half is responsible for the 3' incision and the C-terminal half is responsible for the 5' incision. This chain is UvrABC system protein C, found in Ectopseudomonas mendocina (strain ymp) (Pseudomonas mendocina).